The chain runs to 159 residues: Elicitor-responsive protein 1 (159 aa).

The 112-residue stretch at 1–112 (MAGSGVLEVH…SLGMEHGTWE (112 aa)) folds into the C2 domain. Ca(2+) is bound by residues Asp-21 and Asp-30. At Ser-44 the chain carries Phosphoserine; by CPK. The Ca(2+) site is built by Asp-81, Asp-83, Ser-86, and Asp-89.

Ca(2+) is required as a cofactor. Post-translationally, phosphorylated at Ser-44 by CPK18 in a calcium-dependent manner. In terms of tissue distribution, isoform 2 is expressed in young vascular tissues and tiller buds.

The protein localises to the cytoplasm. It localises to the cell membrane. Functionally, may play a role in plant defense signaling. Isoform 2 binds to phospholipids in a Ca(2+)-dependent manner in response to pathogen elicitors. The protein is Elicitor-responsive protein 1 (ERG1) of Oryza sativa subsp. japonica (Rice).